The primary structure comprises 432 residues: MAISGFKGTLKLKPLKTPVFYKRDKDFRGYFSGHLQHKETKLSPAQLEAFRNAYNFFTKDRTGCIDSHGLMSTVAKLGMNLNAYDIYNELKCADRDRDGKINFSDFIDVLTDKKLFLKAVVPEKRICLDLANNPGILLFEILSKFVEISALHRKDIIELVSYFRKKFQESNSEILWSPYGRRAFKTDICSPPRSSTAAFANSARISIMKERDLYKFLEALKRCNLRTDSPYSKIPVFPLFPDVDGVVLGKPFKDTQKLEMLRKREPLSFFEDYFFNKRDWKTQAMNVKPLKSASGYSDDILAIDQLFKKKQHWTVSDAVALKQHVKRATDTYHLGIALDHRKEMLNLWKKIRGDLVGLESNNESFYNTFSTYTWSWNVCQELLSAKDLRLHDANVNKTSPSNSGLSSPSDLSESDPETGRKRKRKSSRGFRQ.

EF-hand domains are found at residues 45 to 80 (AQLE…LGMN) and 81 to 116 (LNAY…KKLF). Residues Asp-94, Asp-96, Asp-98, Lys-100, and Asp-105 each coordinate Ca(2+). Tyr-273 carries the post-translational modification Phosphotyrosine. Residues 394-432 (NVNKTSPSNSGLSSPSDLSESDPETGRKRKRKSSRGFRQ) are disordered. Over residues 399–411 (SPSNSGLSSPSDL) the composition is skewed to low complexity. Residues 420–432 (RKRKRKSSRGFRQ) show a composition bias toward basic residues.

The sequence is that of EF-hand calcium-binding domain-containing protein 3 (Efcab3) from Rattus norvegicus (Rat).